The sequence spans 281 residues: Survival motor neuron protein 1 (281 aa).

Disordered stretches follow at residues Met-1–Ser-20 and Ala-42–Pro-77. Thr-14 is subject to Phosphothreonine. Ser-17 and Ser-20 each carry phosphoserine. Residues Lys-59–Cys-73 are compositionally biased toward basic residues. The 61-residue stretch at Glu-80–Asp-140 folds into the Tudor domain. The segment covering Ala-145 to Arg-159 has biased composition (basic and acidic residues). The interval Ala-145 to Asp-242 is disordered. Composition is skewed to pro residues over residues Met-179–Pro-197 and Pro-212–Ser-235. A P2 (binding site for SNRPB) region spans residues Pro-225–Trp-252. The segment at Gly-264 to His-279 is required for interaction with SYNCRIP.

It belongs to the SMN family. Homodimer. Component of an import snRNP complex composed of kpnb1, rnut1, smn1 and znf259. Part of the core SMN complex that contains smn1, gemin2/sip1, ddx20/gemin3, gemin4, gemin5, gemin6, gemin7, gemin8 and strap/unrip. Interacts with ddx20, fbl, nola1, rnut1, syncrip and with several spliceosomal snRNP core Sm proteins, including snrpb, snrpd1, snrpd2, snrpd3, snrpe and ilf3. Interacts with elavl4.

It is found in the nucleus. It localises to the gem. The protein resides in the cajal body. The protein localises to the cytoplasm. Its subcellular location is the cytoplasmic granule. It is found in the perikaryon. It localises to the cell projection. The protein resides in the neuron projection. The protein localises to the myofibril. Its subcellular location is the sarcomere. It is found in the z line. The SMN complex plays an essential role in spliceosomal snRNP assembly in the cytoplasm and is required for pre-mRNA splicing in the nucleus. It may also play a role in the metabolism of snoRNPs. Required in motor neurons and proprioceptive neurons to ensure correct U12 intron splicing and proper levels of tmem41b mRNA. Required for the maturation of motor neuron axonal branches and dendrites. This chain is Survival motor neuron protein 1 (smn1), found in Danio rerio (Zebrafish).